Consider the following 70-residue polypeptide: MLPPCYNFLKEQHCQKASTQREAEAAVKPLLAPHHVVAVIQEIQLLAAVGEILLLEWLAEVVKLPSRYCC.

This is an uncharacterized protein from Homo sapiens (Human).